The sequence spans 86 residues: Large ribosomal subunit protein bL31 (86 aa).

Positions 66–86 (GMGSADSATSQETKEAKESDK) are disordered. Over residues 77–86 (ETKEAKESDK) the composition is skewed to basic and acidic residues.

Belongs to the bacterial ribosomal protein bL31 family. Type A subfamily. In terms of assembly, part of the 50S ribosomal subunit.

In terms of biological role, binds the 23S rRNA. In Prochlorococcus marinus (strain MIT 9515), this protein is Large ribosomal subunit protein bL31.